The primary structure comprises 106 residues: Putative double-stranded DNA mimic protein VIBHAR_02752 (106 aa).

The protein belongs to the putative dsDNA mimic protein family.

May act as a double-stranded DNA (dsDNA) mimic. Probably regulates the activity of a dsDNA-binding protein. The polypeptide is Putative double-stranded DNA mimic protein VIBHAR_02752 (Vibrio campbellii (strain ATCC BAA-1116)).